Reading from the N-terminus, the 72-residue chain is Translation initiation factor IF-1 (72 aa).

Residues 1–72 enclose the S1-like domain; that stretch reads MAKEGAIEVE…TRGRIVYRYK (72 aa).

Belongs to the IF-1 family. As to quaternary structure, component of the 30S ribosomal translation pre-initiation complex which assembles on the 30S ribosome in the order IF-2 and IF-3, IF-1 and N-formylmethionyl-tRNA(fMet); mRNA recruitment can occur at any time during PIC assembly.

Its subcellular location is the cytoplasm. Functionally, one of the essential components for the initiation of protein synthesis. Stabilizes the binding of IF-2 and IF-3 on the 30S subunit to which N-formylmethionyl-tRNA(fMet) subsequently binds. Helps modulate mRNA selection, yielding the 30S pre-initiation complex (PIC). Upon addition of the 50S ribosomal subunit IF-1, IF-2 and IF-3 are released leaving the mature 70S translation initiation complex. This Corynebacterium glutamicum (strain R) protein is Translation initiation factor IF-1.